The chain runs to 390 residues: Probable tRNA pseudouridine synthase D (390 aa).

Catalysis depends on Asp-93, which acts as the Nucleophile. The 188-residue stretch at 166-353 folds into the TRUD domain; that stretch reads HVLNYFGIQR…YGTRRKLITP (188 aa).

This sequence belongs to the pseudouridine synthase TruD family.

It catalyses the reaction uridine(13) in tRNA = pseudouridine(13) in tRNA. Could be responsible for synthesis of pseudouridine from uracil-13 in transfer RNAs. The sequence is that of Probable tRNA pseudouridine synthase D from Methanococcus vannielii (strain ATCC 35089 / DSM 1224 / JCM 13029 / OCM 148 / SB).